A 309-amino-acid polypeptide reads, in one-letter code: tRNA dimethylallyltransferase (309 aa).

14 to 21 lines the ATP pocket; sequence GPTASGKS. 16–21 lines the substrate pocket; that stretch reads TASGKS. Residues 39-42 form an interaction with substrate tRNA region; the sequence is DSMQ.

The protein belongs to the IPP transferase family. In terms of assembly, monomer. The cofactor is Mg(2+).

The enzyme catalyses adenosine(37) in tRNA + dimethylallyl diphosphate = N(6)-dimethylallyladenosine(37) in tRNA + diphosphate. In terms of biological role, catalyzes the transfer of a dimethylallyl group onto the adenine at position 37 in tRNAs that read codons beginning with uridine, leading to the formation of N6-(dimethylallyl)adenosine (i(6)A). In Geobacter metallireducens (strain ATCC 53774 / DSM 7210 / GS-15), this protein is tRNA dimethylallyltransferase.